We begin with the raw amino-acid sequence, 551 residues long: MSDIAITISLLALVAVIGLWIGHWKIRGVGLGIGGVLFGGIIVAHFTDQYGLKLDAHTLHFVQEFGLILFVYTIGIQVGPGFFSSLRKSGLKLNAFAILIIVLGSIAVVLVHKIADVPLDIALGIYSGAVTNTPALGAGQQILAELGVPQTTVTMGVSYAMAYPFGICGILLAMWLIRLFFNVKVDDEAARFNAESSQDKESLHNISLKVTNQNLDGLTLIQIPGFSDEEVVCSRLKRDDMEIVPKASTEIRTNDILQLVGDDNSLAKMRLIIGYEVDAPTVAYSGEIRSERVVVTNEKVLGKKIRALGIHQKYGVVISRLNRAGIELVPTGNTTLQFGDVLHMVGRSDVLNQAISVIGNAQQKLLQVQMLPVFIGIGLGVLVGSIPFYIPGFPVALKLGLAGGPLVVVLILARIGTIGKLYWFMPPSANLALREIGIVLFLAVVGLKSGGSFFDTLVNGSGLEWMGYGIFITFVPLIIAGTIARLYGKLNYLTICGLLAGSMTDPPALAFANEIKEDNGAAALSYATVYPLVMFLRIMSPQLLAVLLWAA.

Helical transmembrane passes span 4-24, 28-48, 65-85, 95-115, and 157-177; these read IAIT…IGHW, GVGL…HFTD, FGLI…FFSS, AFAI…HKIA, and VSYA…MWLI. RCK C-terminal domains are found at residues 191–275 and 277–360; these read RFNA…IIGY and VDAP…VIGN. 6 consecutive transmembrane segments (helical) span residues 370–390, 402–424, 438–458, 463–483, 492–512, and 529–549; these read MLPV…PFYI, AGGP…LYWF, IVLF…DTLV, LEWM…AGTI, YLTI…LAFA, and VYPL…VLLW.

Belongs to the AAE transporter (TC 2.A.81) family. YidE subfamily.

It localises to the cell membrane. This is Putative transport protein CGSHiEE_03135 from Haemophilus influenzae (strain PittEE).